The chain runs to 373 residues: Flap endonuclease 1 (373 aa).

Positions 1-105 (MGIKGLNALI…GELEKRLKRR (105 aa)) are N-domain. Aspartate 34 contributes to the Mg(2+) binding site. DNA contacts are provided by arginine 47 and arginine 71. Residues aspartate 87, glutamate 159, glutamate 161, aspartate 180, and aspartate 182 each contribute to the Mg(2+) site. The tract at residues 123-254 (DIAKFERRTV…VTAFKLIKEH (132 aa)) is I-domain. Glutamate 159 is a binding site for DNA. Residues glycine 232 and aspartate 234 each coordinate DNA. A Mg(2+)-binding site is contributed by aspartate 234. Positions 340–348 (TQGRLDKFF) are interaction with PCNA. The disordered stretch occupies residues 347 to 373 (FFVVKKRPAEEKKGKNTKEEKPKKKRK).

Belongs to the XPG/RAD2 endonuclease family. FEN1 subfamily. As to quaternary structure, interacts with PCNA. Three molecules of FEN1 bind to one PCNA trimer with each molecule binding to one PCNA monomer. PCNA stimulates the nuclease activity without altering cleavage specificity. Mg(2+) is required as a cofactor. Post-translationally, phosphorylated. Phosphorylation upon DNA damage induces relocalization to the nuclear plasma.

Its subcellular location is the nucleus. It localises to the nucleolus. The protein localises to the nucleoplasm. It is found in the mitochondrion. Structure-specific nuclease with 5'-flap endonuclease and 5'-3' exonuclease activities involved in DNA replication and repair. During DNA replication, cleaves the 5'-overhanging flap structure that is generated by displacement synthesis when DNA polymerase encounters the 5'-end of a downstream Okazaki fragment. It enters the flap from the 5'-end and then tracks to cleave the flap base, leaving a nick for ligation. Also involved in the long patch base excision repair (LP-BER) pathway, by cleaving within the apurinic/apyrimidinic (AP) site-terminated flap. Acts as a genome stabilization factor that prevents flaps from equilibrating into structures that lead to duplications and deletions. Also possesses 5'-3' exonuclease activity on nicked or gapped double-stranded DNA, and exhibits RNase H activity. Also involved in replication and repair of rDNA and in repairing mitochondrial DNA. The sequence is that of Flap endonuclease 1 from Komagataella phaffii (strain GS115 / ATCC 20864) (Yeast).